The primary structure comprises 470 residues: Uronate isomerase (470 aa).

This sequence belongs to the metallo-dependent hydrolases superfamily. Uronate isomerase family.

It carries out the reaction D-glucuronate = D-fructuronate. The enzyme catalyses aldehydo-D-galacturonate = keto-D-tagaturonate. Its pathway is carbohydrate metabolism; pentose and glucuronate interconversion. This is Uronate isomerase from Salmonella paratyphi A (strain ATCC 9150 / SARB42).